The following is a 177-amino-acid chain: Ribosome maturation factor RimP (177 aa).

Belongs to the RimP family.

It is found in the cytoplasm. In terms of biological role, required for maturation of 30S ribosomal subunits. The protein is Ribosome maturation factor RimP of Methylibium petroleiphilum (strain ATCC BAA-1232 / LMG 22953 / PM1).